Consider the following 118-residue polypeptide: NADH-quinone oxidoreductase subunit A (118 aa).

3 helical membrane-spanning segments follow: residues 5-25 (FAAVGIALVVAIAINLIMMLM), 61-81 (FLYALVFTAFDVETVFLFPWA), and 90-110 (FAFIEMFVFIVILLVGFWYAW).

It belongs to the complex I subunit 3 family. As to quaternary structure, NDH-1 is composed of 14 different subunits. Subunits NuoA, H, J, K, L, M, N constitute the membrane sector of the complex.

The protein localises to the cell membrane. It carries out the reaction a quinone + NADH + 5 H(+)(in) = a quinol + NAD(+) + 4 H(+)(out). Its function is as follows. NDH-1 shuttles electrons from NADH, via FMN and iron-sulfur (Fe-S) centers, to quinones in the respiratory chain. The immediate electron acceptor for the enzyme in this species is believed to be a menaquinone. Couples the redox reaction to proton translocation (for every two electrons transferred, four hydrogen ions are translocated across the cytoplasmic membrane), and thus conserves the redox energy in a proton gradient. The polypeptide is NADH-quinone oxidoreductase subunit A (Desulfitobacterium hafniense (strain Y51)).